The sequence spans 304 residues: Calcium release-activated calcium channel protein 1 (304 aa).

Pro residues predominate over residues Met-1–Asn-11. A disordered region spans residues Met-1 to Pro-49. Topologically, residues Met-1–Lys-88 are cytoplasmic. The tract at residues Pro-3–Pro-49 is required for generation of inwardly rectifying CRAC currents. The segment covering Ser-12–Ser-27 has biased composition (low complexity). The AKAP5 association region stretch occupies residues Pro-39 to Ser-60. The segment at Ser-71–Ser-91 is interaction with STIM1. Residues Ala-89 to Val-106 traverse the membrane as a helical segment. Residues Glu-107–Leu-120 are Extracellular-facing. A helical transmembrane segment spans residues Leu-121–Ile-141. Over Ser-142–Glu-174 the chain is Cytoplasmic. The helical transmembrane segment at Leu-175–Leu-195 threads the bilayer. Residues Cys-196–Ala-237 lie on the Extracellular side of the membrane. The N-linked (GlcNAc...) asparagine glycan is linked to Asn-225. Residues Ala-238–Val-258 form a helical membrane-spanning segment. The Cytoplasmic portion of the chain corresponds to His-259 to Ala-304. The interval Glu-275–His-295 is interaction with STIM1. At Thr-298 the chain carries Phosphothreonine.

The protein belongs to the Orai family. As to quaternary structure, oligomerizes in homomeric and heteromeric ORAI complexes. Native CRAC channels most likely consist of hexameric ORAI heteromers, implying that diverse ORAI1, ORAI2 and ORAI3 subunit combinations with distinct biophysical properties can operate in a cell-type specific way. ARC channels are heteropentamers consisting of three ORAI1 and two ORAI3 subunits. Interacts with STIM1 and STIM2; this regulates channel activity. Interacts with CALM; this may displace STIM1 and STIM2 and might thereby modulate channel activity. Interacts (via N-terminus) with AKAP5 upon store depletion. Interacts with CRACR2A/EFCAB4B; the interaction is direct and takes place in absence of Ca(2+). Forms a complex with CRACR2A/EFCAB4B and STIM1 at low concentration of Ca(2+), the complex dissociates at elevated Ca(2+) concentrations. Interacts with ASPH (isoform 8). Interacts with SLC35G1. Interacts with UBQLN1. Interacts with ADCY8; interaction is calcium store depletion independent; interaction occurs in membrane raft; interaction increases markedly after store depletion; positively regulates SOCE-induced adenylate cyclase activity; contributes to the targeting of ADCY8 to discrete regions of the plasma membrane that are shielded from other calcium events. Interacts with EFHB; the interaction takes place upon Ca(2+)-store depletion. Interacts (via N- and C-termini) with ATP2C2 (via N-terminus); this interaction regulates Ca(2+) influx at the plasma membrane. Interacts with TSPAN18; this interaction regulates ORAI1 exit from the endoplasmic (ER), and/or Golgi, and trafficking to the cell surface. N-glycosylated. N-glycosylation inhibits channel activity in T cells. Post-translationally, ubiquitinated. In terms of processing, cys-195 is oxidated, leading to inactivation of channel activity.

Its subcellular location is the cell membrane. It is found in the basolateral cell membrane. It catalyses the reaction Ca(2+)(in) = Ca(2+)(out). With respect to regulation, oxidation at Cys-196 leads to inactivation of channel activity. Pore-forming subunit of two major inward rectifying Ca(2+) channels at the plasma membrane: Ca(2+) release-activated Ca(2+) (CRAC) channels and arachidonate-regulated Ca(2+)-selective (ARC) channels. Assembles with ORAI2 and ORAI3 to form hexameric CRAC channels that mediate Ca(2+) influx upon depletion of endoplasmic reticulum Ca(2+) store and channel activation by Ca(2+) sensor STIM1, a process known as store-operated Ca(2+) entry (SOCE). Various pore subunit combinations may account for distinct CRAC channel spatiotemporal and cell-type specific dynamics. ORAI1 mainly contributes to the generation of Ca(2+) plateaus involved in sustained Ca(2+) entry and is dispensable for cytosolic Ca(2+) oscillations, whereas ORAI2 and ORAI3 generate oscillatory patterns. CRAC channels assemble in Ca(2+) signaling microdomains where Ca(2+) influx is coupled to calmodulin and calcineurin signaling and activation of NFAT transcription factors recruited to ORAI1 via AKAP5. Activates NFATC2/NFAT1 and NFATC3/NFAT4-mediated transcriptional responses. CRAC channels are the main pathway for Ca(2+) influx in T cells and promote the immune response to pathogens by activating NFAT-dependent cytokine and chemokine transcription. Assembles with ORAI3 to form channels that mediate store-independent Ca(2+) influx in response to inflammatory metabolites arachidonate or its derivative leukotriene C4, termed ARC and LRC channels respectively. Plays a prominent role in Ca(2+) influx at the basolateral membrane of mammary epithelial cells independently of the Ca(2+) content of endoplasmic reticulum or Golgi stores. May mediate transepithelial transport of large quantities of Ca(2+) for milk secretion. In Rattus norvegicus (Rat), this protein is Calcium release-activated calcium channel protein 1 (Orai1).